Reading from the N-terminus, the 81-residue chain is Defensin-like protein b (81 aa).

The N-terminal stretch at 1 to 26 (MRNATFFIVFYVFISLVLSNVQDVTA) is a signal peptide. Cystine bridges form between C31–C81, C42–C66, C50–C76, and C64–C78.

Belongs to the DEFL family. In terms of tissue distribution, expressed in microspores and in young and mature anthers.

The protein resides in the secreted. Involved in self-incompatibility. The protein is Defensin-like protein b (SCRb-1) of Arabidopsis lyrata (Lyre-leaved rock-cress).